A 425-amino-acid chain; its full sequence is Serine--tRNA ligase (425 aa).

Position 228–230 (228–230) interacts with L-serine; sequence TAE. 259–261 contacts ATP; sequence RSE. Residue Glu-282 participates in L-serine binding. An ATP-binding site is contributed by 346–349; sequence EIAS. Ser-382 serves as a coordination point for L-serine.

It belongs to the class-II aminoacyl-tRNA synthetase family. Type-1 seryl-tRNA synthetase subfamily. In terms of assembly, homodimer. The tRNA molecule binds across the dimer.

It localises to the cytoplasm. The enzyme catalyses tRNA(Ser) + L-serine + ATP = L-seryl-tRNA(Ser) + AMP + diphosphate + H(+). It catalyses the reaction tRNA(Sec) + L-serine + ATP = L-seryl-tRNA(Sec) + AMP + diphosphate + H(+). It functions in the pathway aminoacyl-tRNA biosynthesis; selenocysteinyl-tRNA(Sec) biosynthesis; L-seryl-tRNA(Sec) from L-serine and tRNA(Sec): step 1/1. Its function is as follows. Catalyzes the attachment of serine to tRNA(Ser). Is also able to aminoacylate tRNA(Sec) with serine, to form the misacylated tRNA L-seryl-tRNA(Sec), which will be further converted into selenocysteinyl-tRNA(Sec). In Rickettsia felis (strain ATCC VR-1525 / URRWXCal2) (Rickettsia azadi), this protein is Serine--tRNA ligase.